Here is a 60-residue protein sequence, read N- to C-terminus: UPF0434 protein Pnap_1922 (60 aa).

This sequence belongs to the UPF0434 family.

This chain is UPF0434 protein Pnap_1922, found in Polaromonas naphthalenivorans (strain CJ2).